The sequence spans 603 residues: Isocitrate dehydrogenase kinase/phosphatase (603 aa).

ATP-binding positions include 327 to 333 (APGIKGL) and lysine 348. Aspartate 383 is a catalytic residue.

It belongs to the AceK family.

It is found in the cytoplasm. It carries out the reaction L-seryl-[isocitrate dehydrogenase] + ATP = O-phospho-L-seryl-[isocitrate dehydrogenase] + ADP + H(+). Functionally, bifunctional enzyme which can phosphorylate or dephosphorylate isocitrate dehydrogenase (IDH) on a specific serine residue. This is a regulatory mechanism which enables bacteria to bypass the Krebs cycle via the glyoxylate shunt in response to the source of carbon. When bacteria are grown on glucose, IDH is fully active and unphosphorylated, but when grown on acetate or ethanol, the activity of IDH declines drastically concomitant with its phosphorylation. The sequence is that of Isocitrate dehydrogenase kinase/phosphatase from Burkholderia mallei (strain ATCC 23344).